The sequence spans 820 residues: Leucine--tRNA ligase (820 aa).

The 'HIGH' region motif lies at 42 to 52; sequence PYPSGDLHMGH. Positions 576 to 580 match the 'KMSKS' region motif; it reads KMSKS. Lys579 is an ATP binding site.

Belongs to the class-I aminoacyl-tRNA synthetase family.

The protein localises to the cytoplasm. It carries out the reaction tRNA(Leu) + L-leucine + ATP = L-leucyl-tRNA(Leu) + AMP + diphosphate. The protein is Leucine--tRNA ligase of Coxiella burnetii (strain CbuK_Q154) (Coxiella burnetii (strain Q154)).